Reading from the N-terminus, the 1488-residue chain is Phenolphthiocerol/phthiocerol polyketide synthase subunit E (1488 aa).

The 434-residue stretch at 5–438 (ENAIAVVGMA…GTNAHVVLEE (434 aa)) folds into the Ketosynthase family 3 (KS3) domain. Active-site for beta-ketoacyl synthase activity residues include Cys-184, His-320, and His-361. The acyltransferase stretch occupies residues 551–868 (VFLFPGQGAQ…GELWSAGVEV (318 aa)). Ser-641 (for malonyltransferase activity) is an active-site residue. A Carrier domain is found at 930–1004 (NGESQTEVTL…SLTAAVDASF (75 aa)). An O-(pantetheine 4'-phosphoryl)serine modification is found at Ser-965. NADP(+) is bound at residue 1286–1331 (EGVVAVELEGEGRSVLRPDVDLRRTVGWFTTYYPVPLACATGLGAL).

NADP(+) is required as a cofactor. It depends on pantetheine 4'-phosphate as a cofactor.

The catalysed reaction is icosanoyl-[(phenol)carboxyphthiodiolenone synthase] + 2 (S)-methylmalonyl-CoA + 3 malonyl-CoA + 5 NADPH + 10 H(+) = C32-carboxyphthiodiolenone-[(phenol)carboxyphthiodiolenone synthase] + 5 CO2 + 5 NADP(+) + 5 CoA + 2 H2O. It carries out the reaction docosanoyl-[(phenol)carboxyphthiodiolenone synthase] + 2 (S)-methylmalonyl-CoA + 3 malonyl-CoA + 5 NADPH + 10 H(+) = C34-carboxyphthiodiolenone-[(phenol)carboxyphthiodiolenone synthase] + 5 CO2 + 5 NADP(+) + 5 CoA + 2 H2O. It catalyses the reaction 17-(4-hydroxyphenyl)heptadecanoyl-[(phenol)carboxyphthiodiolenone synthase] + 2 (S)-methylmalonyl-CoA + 3 malonyl-CoA + 5 NADPH + 10 H(+) = C35-(phenol)carboxyphthiodiolenone-[(phenol)carboxyphthiodiolenone synthase] + 5 CO2 + 5 NADP(+) + 5 CoA + 2 H2O. The enzyme catalyses 19-(4-hydroxyphenyl)nonadecanoyl-[(phenol)carboxyphthiodiolenone synthase] + 2 (S)-methylmalonyl-CoA + 3 malonyl-CoA + 5 NADPH + 10 H(+) = C37-(phenol)carboxyphthiodiolenone-[(phenol)carboxyphthiodiolenone synthase] + 5 CO2 + 5 NADP(+) + 5 CoA + 2 H2O. It functions in the pathway lipid metabolism; fatty acid biosynthesis. Its function is as follows. Part of the PpsABCDE complex involved in the biosynthesis of the lipid core common to phthiocerols and phenolphthiocerols by successive additions of malonyl-CoA or methylmalonyl-CoA extender units. PpsA can accept as substrate the activated forms of either icosanoyl (C20), docosanoyl (C22) or lignoceroyl (C24) groups from FadD26, or a (4-hydroxyphenyl)-C17 or (4-hydroxyphenyl)-C19 fatty acyl from FadD29. PpsA initiates the biosynthesis and extends its substrate using a malonyl-CoA extender unit. The PpsB and PpsC proteins add the second and third malonyl-CoA extender units. PpsD adds an (R)-methylmalonyl unit and PpsE adds a second (R)-methylmalonyl unit. The incorporation of the methylmalonyl units results in formation of two branched methyl groups in the elongated product. This Mycobacterium tuberculosis (strain CDC 1551 / Oshkosh) protein is Phenolphthiocerol/phthiocerol polyketide synthase subunit E (ppsE).